The following is a 538-amino-acid chain: Calcium-dependent protein kinase 32 (538 aa).

The segment at 1 to 37 is disordered; sequence MGNCCGTAGSLAQNDNKPKKGRKKQNPFSIDYGLHHG. Gly-2 carries N-myristoyl glycine lipidation. Residues 63–321 enclose the Protein kinase domain; sequence YTLGRELGRG…AQQVLDHPWL (259 aa). Residues 69–77 and Lys-92 contribute to the ATP site; that span reads LGRGEFGVT. Asp-187 (proton acceptor) is an active-site residue. Phosphoserine is present on Ser-227. Residues 327–357 are autoinhibitory domain; that stretch reads APNVSLGETVRARLKQFTVMNKLKKRALRVI. EF-hand domains are found at residues 364–399, 400–435, 436–470, and 471–506; these read EEASGIREGFQIMDTSQRGKINIDELKIGLQKLGHA, IPQDDLQILMDAGDIDRDGYLDCDEFIAISVHLRKM, GNDEHLKKAFAFFDQNNNGYIEIEELREALSDELG, and TSEEVVDAIIRDVDTDKDGRISYEEFVTMMKTGTDW. Ca(2+)-binding residues include Asp-377, Ser-379, Lys-383, Glu-388, Asp-413, Asp-415, Asp-417, Tyr-419, Glu-424, Asp-449, Asn-451, Asn-453, Tyr-455, Glu-460, Asp-484, Asp-486, Asp-488, and Arg-490. Ser-492 carries the post-translational modification Phosphoserine. Residue Glu-495 coordinates Ca(2+).

The protein belongs to the protein kinase superfamily. Ser/Thr protein kinase family. CDPK subfamily. Interacts with ABF4. Interacts with CNGC18. As to expression, expressed in embryos and most of the vegetative tissues.

The protein resides in the nucleus. The protein localises to the membrane. It catalyses the reaction L-seryl-[protein] + ATP = O-phospho-L-seryl-[protein] + ADP + H(+). The catalysed reaction is L-threonyl-[protein] + ATP = O-phospho-L-threonyl-[protein] + ADP + H(+). Its activity is regulated as follows. Activated by calcium. Autophosphorylation may play an important role in the regulation of the kinase activity. May play a role in signal transduction pathways that involve calcium as a second messenger. Involved in maintaining Ca2+ homeostasis in pollen tube tips by regulating CNGC18. Functions as regulator of the calcium-mediated abscisic acid (ABA) signaling pathway. Phosphorylates ABA-responsive transcription factor ABF4 in vitro. This is Calcium-dependent protein kinase 32 from Arabidopsis thaliana (Mouse-ear cress).